We begin with the raw amino-acid sequence, 615 residues long: Zinc metalloproteinase-disintegrin-like (615 aa).

Residues 1–20 form the signal peptide; that stretch reads MIQALLVTICLVGFPHQGSS. A propeptide spanning residues 21 to 195 is cleaved from the precursor; the sequence is IILESGNVKD…KMNFQSANNP (175 aa). Residues 204 to 400 enclose the Peptidase M12B domain; the sequence is KYIKLAVVVD…DLPQCILNKP (197 aa). 3 cysteine pairs are disulfide-bonded: Cys-315/Cys-395, Cys-355/Cys-379, and Cys-357/Cys-362. Residue His-340 participates in Zn(2+) binding. Residue Glu-341 is part of the active site. Zn(2+) is bound by residues His-344 and His-350. Positions 408–494 constitute a Disintegrin domain; the sequence is PAVCGNNFVE…DCPMDGLQRN (87 aa). 5 residues coordinate Ca(2+): Val-410, Asn-413, Phe-415, Glu-417, and Asp-423. Intrachain disulfides connect Cys-411/Cys-440, Cys-422/Cys-435, Cys-424/Cys-430, Cys-434/Cys-457, Cys-448/Cys-454, Cys-453/Cys-479, Cys-466/Cys-486, Cys-473/Cys-505, Cys-498/Cys-510, Cys-517/Cys-567, Cys-532/Cys-576, Cys-545/Cys-555, Cys-562/Cys-602, and Cys-596/Cys-608. A D/ECD-tripeptide motif is present at residues 472–474; that stretch reads DCD.

This sequence belongs to the venom metalloproteinase (M12B) family. P-III subfamily. P-IIIa sub-subfamily. In terms of assembly, monomer. The cofactor is Zn(2+). Expressed by the venom gland.

It is found in the secreted. Its function is as follows. Snake venom zinc metalloprotease that may induce platelet aggregation. In Cerberus rynchops (Dog-faced water snake), this protein is Zinc metalloproteinase-disintegrin-like.